A 412-amino-acid polypeptide reads, in one-letter code: MPTVGSLVYIMVELAIALLAILGNMLVCWAVWLNSNLQNVTNYFVVSLAAADIAVGVLAIPFAITISTGFCAACHGCLFIACFVLVLTQSSIFSLLAIAIDRYIAIRIPLRYNGLVTGTRAKGVIAVCWVLSFAIGLTPMLGWNNCHHWGEGENQSQGCGEGQVACLFEDVVPMNYMVYYNFFACVLVPLLLMLGVYLRIFLAARRQLKQMETQPLPGERARSTLQKEVHAAKSLAIIVGLFALCWLPLHIINCFTFFCPECPHAPLWLMYPAIILSHFNSVVNPFIYAYRIREFRHTFHKIIRSHILRRQEPFKAGGTSARALAAHGSDAEQVSLRLNGHPSGVCPNGSAPHPERRPNGYALGLVSRASARESPGDTGLPDVELLSHELHGASPESPGLEGPLAQDGAGVS.

Topologically, residues 1–7 are extracellular; sequence MPTVGSL. A helical membrane pass occupies residues 8-32; sequence VYIMVELAIALLAILGNMLVCWAVW. Topologically, residues 33-42 are cytoplasmic; sequence LNSNLQNVTN. The helical transmembrane segment at 43-66 threads the bilayer; that stretch reads YFVVSLAAADIAVGVLAIPFAITI. Residues 67–77 lie on the Extracellular side of the membrane; sequence STGFCAACHGC. Intrachain disulfides connect Cys-71–Cys-159, Cys-74–Cys-146, and Cys-77–Cys-166. A helical membrane pass occupies residues 78–100; sequence LFIACFVLVLTQSSIFSLLAIAI. The Cytoplasmic segment spans residues 101 to 120; the sequence is DRYIAIRIPLRYNGLVTGTR. Residues 121 to 143 form a helical membrane-spanning segment; that stretch reads AKGVIAVCWVLSFAIGLTPMLGW. Over 144 to 173 the chain is Extracellular; sequence NNCHHWGEGENQSQGCGEGQVACLFEDVVP. Asn-154 carries N-linked (GlcNAc...) asparagine glycosylation. Glu-169 provides a ligand contact to adenosine. Residues 174 to 198 traverse the membrane as a helical segment; the sequence is MNYMVYYNFFACVLVPLLLMLGVYL. The Cytoplasmic segment spans residues 199 to 234; sequence RIFLAARRQLKQMETQPLPGERARSTLQKEVHAAKS. Residues 235-258 form a helical membrane-spanning segment; that stretch reads LAIIVGLFALCWLPLHIINCFTFF. An adenosine-binding site is contributed by Asn-253. Residues Cys-259 and Cys-262 are joined by a disulfide bond. Topologically, residues 259-266 are extracellular; sequence CPECPHAP. Residues 267–290 traverse the membrane as a helical segment; it reads LWLMYPAIILSHFNSVVNPFIYAY. Adenosine-binding residues include Ser-277 and His-278. Residues 291-412 lie on the Cytoplasmic side of the membrane; the sequence is RIREFRHTFH…PLAQDGAGVS (122 aa). Residues 368–412 are disordered; the sequence is RASARESPGDTGLPDVELLSHELHGASPESPGLEGPLAQDGAGVS.

Belongs to the G-protein coupled receptor 1 family. As to quaternary structure, interacts (via cytoplasmic C-terminal domain) with USP4; the interaction is direct. May interact with DRD4. Interacts with NECAB2. Interacts (via cytoplasmic C-terminal domain) with GAS2L2; interaction enhances receptor-mediated adenylyl cyclase activity. Post-translationally, ubiquitinated. Deubiquitinated by USP4; leading to stabilization and expression at the cell surface.

Its subcellular location is the cell membrane. In terms of biological role, receptor for adenosine. The activity of this receptor is mediated by G proteins which activate adenylyl cyclase. In Equus caballus (Horse), this protein is Adenosine receptor A2a (ADORA2A).